The sequence spans 558 residues: Membrane protein insertase YidC (558 aa).

The next 6 membrane-spanning stretches (helical) occupy residues 6–26 (VIAA…FFQP), 326–348 (LAID…DYFF), 355–377 (GLAI…NFSF), 424–444 (LPIL…FVTI), 469–489 (VFGL…WPII), and 512–532 (IFMF…AGLV).

The protein belongs to the OXA1/ALB3/YidC family. Type 1 subfamily. Interacts with the Sec translocase complex via SecD. Specifically interacts with transmembrane segments of nascent integral membrane proteins during membrane integration.

The protein localises to the cell inner membrane. Functionally, required for the insertion and/or proper folding and/or complex formation of integral membrane proteins into the membrane. Involved in integration of membrane proteins that insert both dependently and independently of the Sec translocase complex, as well as at least some lipoproteins. Aids folding of multispanning membrane proteins. The chain is Membrane protein insertase YidC from Pelagibacter ubique (strain HTCC1062).